Reading from the N-terminus, the 342-residue chain is S-adenosylmethionine:tRNA ribosyltransferase-isomerase (342 aa).

The protein belongs to the QueA family. In terms of assembly, monomer.

The protein localises to the cytoplasm. It catalyses the reaction 7-aminomethyl-7-carbaguanosine(34) in tRNA + S-adenosyl-L-methionine = epoxyqueuosine(34) in tRNA + adenine + L-methionine + 2 H(+). The protein operates within tRNA modification; tRNA-queuosine biosynthesis. In terms of biological role, transfers and isomerizes the ribose moiety from AdoMet to the 7-aminomethyl group of 7-deazaguanine (preQ1-tRNA) to give epoxyqueuosine (oQ-tRNA). This is S-adenosylmethionine:tRNA ribosyltransferase-isomerase from Streptococcus pyogenes serotype M3 (strain ATCC BAA-595 / MGAS315).